The sequence spans 324 residues: UDP-N-acetylenolpyruvoylglucosamine reductase (324 aa).

The FAD-binding PCMH-type domain maps to 36–203 (FRAGGLAELM…THAIFEGYAE (168 aa)). Residue arginine 183 is part of the active site. Residue serine 232 is the Proton donor of the active site. Glutamate 302 is a catalytic residue.

Belongs to the MurB family. Requires FAD as cofactor.

It is found in the cytoplasm. The enzyme catalyses UDP-N-acetyl-alpha-D-muramate + NADP(+) = UDP-N-acetyl-3-O-(1-carboxyvinyl)-alpha-D-glucosamine + NADPH + H(+). Its pathway is cell wall biogenesis; peptidoglycan biosynthesis. Its function is as follows. Cell wall formation. The chain is UDP-N-acetylenolpyruvoylglucosamine reductase from Rhizobium meliloti (strain 1021) (Ensifer meliloti).